Here is a 262-residue protein sequence, read N- to C-terminus: Acyl-[acyl-carrier-protein]--UDP-N-acetylglucosamine O-acyltransferase (262 aa).

This sequence belongs to the transferase hexapeptide repeat family. LpxA subfamily. Homotrimer.

It is found in the cytoplasm. The catalysed reaction is a (3R)-hydroxyacyl-[ACP] + UDP-N-acetyl-alpha-D-glucosamine = a UDP-3-O-[(3R)-3-hydroxyacyl]-N-acetyl-alpha-D-glucosamine + holo-[ACP]. It participates in glycolipid biosynthesis; lipid IV(A) biosynthesis; lipid IV(A) from (3R)-3-hydroxytetradecanoyl-[acyl-carrier-protein] and UDP-N-acetyl-alpha-D-glucosamine: step 1/6. Involved in the biosynthesis of lipid A, a phosphorylated glycolipid that anchors the lipopolysaccharide to the outer membrane of the cell. This Yersinia enterocolitica protein is Acyl-[acyl-carrier-protein]--UDP-N-acetylglucosamine O-acyltransferase.